Consider the following 4834-residue polypeptide: E3 ubiquitin-protein ligase HERC2 (4834 aa).

The tract at residues 50–88 (TESTQNGELPPRKDDSVEPSGTKKEDLNDKEKKDEEETP) is disordered. The span at 59–84 (PPRKDDSVEPSGTKKEDLNDKEKKDE) shows a compositional bias: basic and acidic residues. The residue at position 272 (Thr-272) is a Phosphothreonine. The RCC1 1-1 repeat unit spans residues 415 to 461 (PTSHKGSLQEVIGWGLIGWKYYANVIGPIQCEGLANLGVTQIACAEK). The RCC1 1-2 repeat unit spans residues 462 to 512 (RFLILSRNGRVYTQAYNSDTLAPQLVQGLASRNIVKIAAHSDGHHYLALAA). One copy of the RCC1 1-3 repeat lies at 513 to 568 (TGEVYSWGCGDGGRLGHGDTVPLEEPKVISAFSGKQAGKHVVHIACGSTYSAAITA). The RCC1 1-4 repeat unit spans residues 569 to 620 (EGELYTWGRGNYGRLGHGSSEDEAIPMLVAGLKGLKVIDVACGSGDAQTLAV). An RCC1 1-5 repeat occupies 623-674 (NGQVWSWGDGDYGKLGRGGSDGCKTPKLIEKLQDLDVVKVRCGSQFSIALTK). The residue at position 647 (Thr-647) is a Phosphothreonine. Residues 675–726 (DGQVYSWGKGDNQRLGHGTEEHVRYPKLLEGLQGKKVIDVAAGSTHCLALTE) form an RCC1 1-6 repeat. The stretch at 728–778 (SEVHSWGSNDQCQHFDTLRVTKPEPAALPGLDTKHIVGIACGPAQSFAWSS) is one RCC1 1-7 repeat. Residues 948-980 (LHAAITAEIQDIEAKKEAQKEKEIDEQEANAST) adopt a coiled-coil conformation. In terms of domain architecture, Cytochrome b5 heme-binding spans 1207-1283 (VTLIRKADLE…MHAFCVGQYL (77 aa)). The tract at residues 1555–1575 (RKKRVPKKPESTDDEEKIGNE) is disordered. Acidic residues predominate over residues 1566–1575 (TDDEEKIGNE). The residue at position 1577 (Ser-1577) is a Phosphoserine. Positions 1859 to 1932 (SGPELAAMMK…KYDLKLAELP (74 aa)) constitute an MIB/HERC2 domain. The tract at residues 1933-1958 (AAAQPSAEDSDTEDDSEAEQTERNIH) is disordered. The span at 1940–1951 (EDSDTEDDSEAE) shows a compositional bias: acidic residues. A Phosphoserine modification is found at Ser-1942. Thr-1944 is subject to Phosphothreonine. The residue at position 2454 (Ser-2454) is a Phosphoserine. A CPH domain is found at 2554 to 2630 (RADFLSNDDY…RYIHVELIGY (77 aa)). Residues 2703–2755 (HPGVTCDGCQMFPINGSRFKCRNCDDFDFCETCFKTKKHNTRHTFGRINEPGQ) form a ZZ-type zinc finger. Zn(2+)-binding residues include Cys-2708, Cys-2711, Cys-2723, Cys-2726, Cys-2732, Cys-2735, His-2741, and His-2745. Positions 2759–2936 (FCGRSGKQLK…ASDNEEEEDE (178 aa)) constitute a DOC domain. Ser-2928 is subject to Phosphoserine. The stretch at 2958–3009 (RTKVFVWGLNDKDQLGGLKGSKIKVPSFSETLSALNVVQVAGGSKSLFAVTV) is one RCC1 2-1 repeat. One copy of the RCC1 2-2 repeat lies at 3010–3064 (EGKVYACGEATNGRLGLGISSGTVPIPRQITALSSYVVKKVAVHSGGRHATALTV). An RCC1 2-3 repeat occupies 3065-3116 (DGKVFSWGEGDDGKLGHFSRMNCDKPRLIEALKTKRIRDIACGSSHSAALTS). Residues 3118-3168 (GELYTWGLGEYGRLGHGDNTTQLKPKMVKVLLGHRVIQVACGSRDAQTLAL) form an RCC1 2-4 repeat. The RCC1 2-5 repeat unit spans residues 3171-3222 (EGLVFSWGDGDFGKLGRGGSEGCNIPQNIERLNGQGVCQIECGAQFSLALTK). An RCC1 2-6 repeat occupies 3224 to 3274 (GVVWTWGKGDYFRLGHGSDVHVRKPQVVEGLRGKKIVHVAVGALHCLAVTD). The stretch at 3275–3326 (SGQVYAWGDNDHGQQGNGTTTVNRKPTLVQGLEGQKITRVACGSSHSVAWTT) is one RCC1 2-7 repeat. Polar residues-rich tracts occupy residues 3602 to 3611 (SQSGRLSSQP) and 3618 to 3629 (HPYTDDTSTSGT). A disordered region spans residues 3602-3629 (SQSGRLSSQPVVVESSHPYTDDTSTSGT). An RCC1 3-1 repeat occupies 3951–4002 (SGTIYGWGHNHRGQLGGIEGAKVKVPTPCEALATLRPVQLIGGEQTLFAVTA). One copy of the RCC1 3-2 repeat lies at 4004 to 4056 (GKLYATGYGAGGRLGIGGTESVSTPTLLESIQHVFIKKVAVNSGGKHCLALSS). The stretch at 4058 to 4108 (GEVYSWGEAEDGKLGHGNRSPCDRPRVIESLRGIEVVDVAAGGAHSACVTA) is one RCC1 3-3 repeat. Residues 4110–4162 (GDLYTWGKGRYGRLGHSDSEDQLKPKLVEALQGHRVVDIACGSGDAQTLCLTD) form an RCC1 3-4 repeat. An RCC1 3-5 repeat occupies 4164-4214 (DTVWSWGDGDYGKLGRGGSDGCKVPMKIDSLTGLGVVKVECGSQFSVALTK). The RCC1 3-6 repeat unit spans residues 4216–4266 (GAVYTWGKGDYHRLGHGSDDHVRRPRQVQGLQGKKVIAIATGSLHCVCCTE). The RCC1 3-7 repeat unit spans residues 4268 to 4318 (GEVYTWGDNDEGQLGDGTTNAIQRPRLVAALQGKKVNRVACGSAHTLAWST). The 338-residue stretch at 4457-4794 (DSLLLPHRVW…IHFCKSIDTD (338 aa)) folds into the HECT domain. Catalysis depends on Cys-4762, which acts as the Glycyl thioester intermediate. The segment at 4804-4834 (EPAADDSSDDSDNEDVDSFASDSTQDYLTGH) is disordered. The span at 4806-4820 (AADDSSDDSDNEDVD) shows a compositional bias: acidic residues. A phosphoserine mark is found at Ser-4810, Ser-4811, and Ser-4814. Positions 4823-4834 (ASDSTQDYLTGH) are enriched in polar residues. Thr-4827 carries the phosphothreonine modification.

As to quaternary structure, interacts (when phosphorylated at Thr-4827 and sumoylated) with RNF8 (via FHA domain); this interaction increases after ionizing radiation (IR) treatment. Interacts with XPA. Interacts with NEURL4. Via its interaction with NEURL4, may indirectly interact with CCP110 and CEP97. In terms of processing, phosphorylation at Thr-4827 is required for interaction with RNF8. Sumoylated with SUMO1 by PIAS4 in response to double-strand breaks (DSBs), promoting the interaction with RNF8.

It localises to the cytoplasm. The protein localises to the cytoskeleton. Its subcellular location is the microtubule organizing center. It is found in the centrosome. The protein resides in the centriole. It localises to the nucleus. The catalysed reaction is S-ubiquitinyl-[E2 ubiquitin-conjugating enzyme]-L-cysteine + [acceptor protein]-L-lysine = [E2 ubiquitin-conjugating enzyme]-L-cysteine + N(6)-ubiquitinyl-[acceptor protein]-L-lysine.. Its pathway is protein modification; protein ubiquitination. Its function is as follows. E3 ubiquitin-protein ligase that regulates ubiquitin-dependent retention of repair proteins on damaged chromosomes. Recruited to sites of DNA damage in response to ionizing radiation (IR) and facilitates the assembly of UBE2N and RNF8 promoting DNA damage-induced formation of 'Lys-63'-linked ubiquitin chains. Acts as a mediator of binding specificity between UBE2N and RNF8. Involved in the maintenance of RNF168 levels. E3 ubiquitin-protein ligase that promotes the ubiquitination and proteasomal degradation of XPA which influences the circadian oscillation of DNA excision repair activity. By controlling the steady-state expression of the IGF1R receptor, indirectly regulates the insulin-like growth factor receptor signaling pathway. Also modulates iron metabolism by regulating the basal turnover of FBXL5. This chain is E3 ubiquitin-protein ligase HERC2, found in Homo sapiens (Human).